We begin with the raw amino-acid sequence, 696 residues long: Elongation factor G (696 aa).

The tr-type G domain maps to Glu-8–Leu-290. Residues Ala-17–Thr-24, Asp-88–His-92, and Asn-142–Asp-145 each bind GTP.

This sequence belongs to the TRAFAC class translation factor GTPase superfamily. Classic translation factor GTPase family. EF-G/EF-2 subfamily.

The protein resides in the cytoplasm. In terms of biological role, catalyzes the GTP-dependent ribosomal translocation step during translation elongation. During this step, the ribosome changes from the pre-translocational (PRE) to the post-translocational (POST) state as the newly formed A-site-bound peptidyl-tRNA and P-site-bound deacylated tRNA move to the P and E sites, respectively. Catalyzes the coordinated movement of the two tRNA molecules, the mRNA and conformational changes in the ribosome. This Nitrosomonas eutropha (strain DSM 101675 / C91 / Nm57) protein is Elongation factor G.